Reading from the N-terminus, the 513-residue chain is Tyrosine-protein phosphatase non-receptor type substrate 1 (513 aa).

Positions Met-1–Gly-31 are cleaved as a signal peptide. Positions Lys-32 to Ser-137 constitute an Ig-like V-type domain. Topologically, residues Lys-32–Asn-373 are extracellular. Residues Asn-54, Asn-92, Asn-168, Asn-180, Asn-205, Asn-209, Asn-246, Asn-271, Asn-293, Asn-302, Asn-312, Asn-320, Asn-345, and Asn-367 are each glycosylated (N-linked (GlcNAc...) asparagine). An intrachain disulfide couples Cys-55 to Cys-121. Ig-like C1-type domains lie at Pro-149–Ser-248 and Pro-255–Thr-343. Cysteines 171 and 229 form a disulfide. Residues Cys-274 and Cys-332 are joined by a disulfide bond. Residues Val-374–Tyr-394 traverse the membrane as a helical segment. Residues Leu-395–Gln-511 lie on the Cytoplasmic side of the membrane. The residue at position 440 (Tyr-440) is a Phosphotyrosine; by Tyr-kinases. The SH2-binding signature appears at Tyr-440 to Leu-443. Residues Asn-444–Lys-513 form a disordered region. The SH3-binding signature appears at Lys-450 to Ala-455. Phosphotyrosine; by Tyr-kinases is present on residues Tyr-464, Tyr-481, and Tyr-505. Short sequence motifs (SH2-binding) lie at residues Tyr-464 to Ile-467, Tyr-481 to Leu-484, and Tyr-505 to Val-508. Over residues Glu-504–Lys-513 the composition is skewed to polar residues.

As to quaternary structure, binds PTPN11 when tyrosine-phosphorylated, except in macrophages, where it primarily binds PTPN6. Binds GRB2 vitro. Binds FGR. Binds JAK2 irrespective of its phosphorylation status and forms a stable complex. Binds SCAP1 and/or SCAP2. The resulting complex recruits FYB1. Binds PTK2B. Interacts with TRIM2. N-glycosylated. In terms of processing, phosphorylated on tyrosine residues. Highly expressed in cerebral cortex, brain, spinal cord, cerebellum and spleen, and at much lower levels in kidney, thymus, heart, lung and liver. Within the cerebellum, highly expressed throughout the molecular layer, and in synaptic glomeruli in the granule cell layer. Detected in neurons of the hippocampus and dentate gyrus, and in olfactory bulb. Not detected in Purkinje cells. Highly expressed in the plexiform layers, optic fiber layer and the outer segments of the photoreceptor layer in the retina. Highly expressed in macrophages. Isoform 3 is detected at very low levels in all tissues tested.

It is found in the membrane. Its function is as follows. Immunoglobulin-like cell surface receptor for CD47. Acts as a docking protein and induces translocation of PTPN6, PTPN11 and other binding partners from the cytosol to the plasma membrane. Supports adhesion of cerebellar neurons, neurite outgrowth and glial cell attachment. May play a key role in intracellular signaling during synaptogenesis and in synaptic function. Involved in the negative regulation of receptor tyrosine kinase-coupled cellular responses induced by cell adhesion, growth factors or insulin. Mediates negative regulation of phagocytosis, mast cell activation and dendritic cell activation. CD47 binding prevents maturation of immature dendritic cells and inhibits cytokine production by mature dendritic cells. Plays a role in antiviral immunity and limits new world arenavirus infection by decreasing virus internalization. Receptor for THBS1. Interaction with THBS1 stimulates phosphorylation of SIRPA. In response to THBS1, involved in ROS signaling in non-phagocytic cells, stimulating NADPH oxidase-derived ROS production. The chain is Tyrosine-protein phosphatase non-receptor type substrate 1 (Sirpa) from Mus musculus (Mouse).